Reading from the N-terminus, the 326-residue chain is Protein phosphatase 1 regulatory subunit SDS22 homolog (326 aa).

The tract at residues 1 to 22 (MSNDKSAEVVVLPRENDEESKE) is disordered. LRR repeat units follow at residues 35–57 (DIDSPEIDLTHTRADHIPDLTGF), 58–80 (PKIEELRMRNNLLVSISPTISSL), 81–102 (VTLTSLDLYENQLTEISHLESL), 103–126 (VNLVSLDLSYNRIRQINGLDKLTK), 128–146 (ETLYLVSNKIEKIENLEAL), 147–170 (TQLKLLELGDNRIKKIENIGHLVN), 172–190 (DELFIGKNKIRQLEGVETL), 191–212 (QKLSVLSLPGNRIVKIENVEQL), 213–236 (NNLKELYLSDQGLQDIHGVEPLTN), 238–256 (LLLDVANNEIKTFSGVERL), 257–280 (ESLNDFWANDNKVESFSEIEQLSK), and 281–304 (LKGLQTVYLERNPFYFNDTNQYRR).

The protein belongs to the SDS22 family.

It localises to the nucleus. In terms of biological role, regulatory subunit of protein phosphatase 1. In Caenorhabditis elegans, this protein is Protein phosphatase 1 regulatory subunit SDS22 homolog (sds-22).